We begin with the raw amino-acid sequence, 478 residues long: Cytochrome c-552 (478 aa).

The first 26 residues, 1 to 26, serve as a signal peptide directing secretion; it reads MARKTLRARRFFSLIFPFFFITSVYA. H94 contributes to the heme c binding site. 3 residues coordinate heme: C122, C125, and K126. The heme c site is built by C160, C163, H164, C209, C212, and H213. Residues E215, Y216, K261, and Q263 each coordinate Ca(2+). Y216 contacts substrate. H264 contributes to the substrate binding site. Positions 275, 282, 285, 286, 301, 314, 317, 318, and 393 each coordinate heme c.

Belongs to the cytochrome c-552 family. The cofactor is Ca(2+). Heme c is required as a cofactor.

It is found in the periplasm. The enzyme catalyses 6 Fe(III)-[cytochrome c] + NH4(+) + 2 H2O = 6 Fe(II)-[cytochrome c] + nitrite + 8 H(+). It functions in the pathway nitrogen metabolism; nitrate reduction (assimilation). Its function is as follows. Catalyzes the reduction of nitrite to ammonia, consuming six electrons in the process. This chain is Cytochrome c-552, found in Salmonella typhi.